The primary structure comprises 464 residues: Glutamate--tRNA ligase 1 (464 aa).

A 'HIGH' region motif is present at residues 10-20 (PSPTGYLHIGG). Residues 238–242 (KLSKR) carry the 'KMSKS' region motif. An ATP-binding site is contributed by Lys241.

Belongs to the class-I aminoacyl-tRNA synthetase family. Glutamate--tRNA ligase type 1 subfamily. Monomer.

It is found in the cytoplasm. The catalysed reaction is tRNA(Glu) + L-glutamate + ATP = L-glutamyl-tRNA(Glu) + AMP + diphosphate. In terms of biological role, catalyzes the attachment of glutamate to tRNA(Glu) in a two-step reaction: glutamate is first activated by ATP to form Glu-AMP and then transferred to the acceptor end of tRNA(Glu). The chain is Glutamate--tRNA ligase 1 from Helicobacter hepaticus (strain ATCC 51449 / 3B1).